A 272-amino-acid chain; its full sequence is 3-methyl-2-oxobutanoate hydroxymethyltransferase (272 aa).

Mg(2+)-binding residues include Asp51 and Asp90. Residues 51-52 (DS), Asp90, and Lys118 contribute to the 3-methyl-2-oxobutanoate site. Mg(2+) is bound at residue Glu120. Glu187 acts as the Proton acceptor in catalysis.

The protein belongs to the PanB family. In terms of assembly, homodecamer; pentamer of dimers. Mg(2+) is required as a cofactor.

It is found in the cytoplasm. The enzyme catalyses 3-methyl-2-oxobutanoate + (6R)-5,10-methylene-5,6,7,8-tetrahydrofolate + H2O = 2-dehydropantoate + (6S)-5,6,7,8-tetrahydrofolate. The protein operates within cofactor biosynthesis; (R)-pantothenate biosynthesis; (R)-pantoate from 3-methyl-2-oxobutanoate: step 1/2. Its function is as follows. Catalyzes the reversible reaction in which hydroxymethyl group from 5,10-methylenetetrahydrofolate is transferred onto alpha-ketoisovalerate to form ketopantoate. This chain is 3-methyl-2-oxobutanoate hydroxymethyltransferase, found in Xylella fastidiosa (strain M23).